Consider the following 161-residue polypeptide: 3-isopropylmalate dehydratase small subunit (161 aa).

The protein belongs to the LeuD family. LeuD type 2 subfamily. Heterodimer of LeuC and LeuD.

The enzyme catalyses (2R,3S)-3-isopropylmalate = (2S)-2-isopropylmalate. It functions in the pathway amino-acid biosynthesis; L-leucine biosynthesis; L-leucine from 3-methyl-2-oxobutanoate: step 2/4. In terms of biological role, catalyzes the isomerization between 2-isopropylmalate and 3-isopropylmalate, via the formation of 2-isopropylmaleate. This chain is 3-isopropylmalate dehydratase small subunit, found in Clostridium botulinum (strain Eklund 17B / Type B).